The sequence spans 767 residues: Actin filament-associated protein 1-like 1 (767 aa).

The span at 83–97 (LRDMSDDGERSKEAS) shows a compositional bias: basic and acidic residues. The segment at 83 to 145 (LRDMSDDGER…KSPEYISSHN (63 aa)) is disordered. Ser87, Ser93, Ser97, Ser103, and Ser152 each carry phosphoserine. Residues 164–173 (SYPTTRMNGE) are compositionally biased toward polar residues. The tract at residues 164 to 210 (SYPTTRMNGESKSSYNDSDAMSSSYESYDEEEEEEKGRQPKHQWPSE) is disordered. The span at 174 to 189 (SKSSYNDSDAMSSSYE) shows a compositional bias: low complexity. A PH 1 domain is found at 219–315 (DCRICAFLLR…WLKVIREVSR (97 aa)). Phosphoserine occurs at positions 328 and 342. The interval 341–381 (LSQEKQNSDSDSLGMNDSSSTLSRREACEHGKGKKNSLAEL) is disordered. Positions 349–362 (DSDSLGMNDSSSTL) are enriched in polar residues. The 95-residue stretch at 417–511 (EAPCCGYLNV…WLGLLLVEMG (95 aa)) folds into the PH 2 domain. A Phosphotyrosine modification is found at Tyr556. The interval 563–605 (KVQDEEPQRPTGAQVKRHASSCSEKSHRADPQVKVKRHASSAN) is disordered. Residues 586 to 595 (EKSHRADPQV) show a composition bias toward basic and acidic residues. The stretch at 610 to 700 (GKNRAEEDAR…AVKERLQQSL (91 aa)) forms a coiled coil. A disordered region spans residues 704-767 (PALGLSVSSK…KAKEWEMKKT (64 aa)). Residues 709–733 (SVSSKSKSQETTNKPQSSVPEQSLP) show a composition bias toward polar residues. Ser746 bears the Phosphoserine mark. Residues 758-767 (KAKEWEMKKT) show a composition bias toward basic and acidic residues.

Interacts with CTTN.

It localises to the cytoplasm. Its subcellular location is the cell projection. It is found in the podosome. The protein resides in the invadopodium. Functionally, may be involved in podosome and invadosome formation. The chain is Actin filament-associated protein 1-like 1 (Afap1l1) from Rattus norvegicus (Rat).